A 1925-amino-acid chain; its full sequence is Methylcytosine dioxygenase tet3-A (1925 aa).

The segment at 62 to 103 (SNKKRKRCGVCVPCLRKEPCGACYNCVNRSTSHQICKMRKCE) adopts a CXXC-type zinc-finger fold. Residues C69, C72, C75, C81, C84, C87, C97, and C102 each coordinate Zn(2+). 4 disordered regions span residues 457–476 (KNAL…QNKK), 630–685 (KSQK…NAVF), 774–812 (GAKD…QNDL), and 833–892 (DFSL…PISH). Residues 465-476 (SPRQTSWEQNKK) show a composition bias toward polar residues. Basic residues predominate over residues 665–677 (KPPRKQVQIKKPR). The segment covering 777-797 (DSCPTPSTDDASSSSGQGDSA) has biased composition (low complexity). Polar residues-rich tracts occupy residues 841–856 (APSQ…QISG) and 883–892 (PALSNNPISH). Zn(2+) is bound by residues C982, C984, C1042, H1068, and C1070. R1110 serves as a coordination point for 2-oxoglutarate. Zn(2+)-binding residues include C1120, C1122, C1138, C1147, and C1207. C1223 contacts 2-oxoglutarate. Residue H1229 coordinates Zn(2+). H1231 and D1233 together coordinate Fe cation. H1265 contacts 2-oxoglutarate. 4 disordered regions span residues 1307–1364 (SEPA…QTKP), 1474–1513 (LADG…KSFN), 1556–1600 (SVHS…LPND), and 1722–1769 (NWAS…EEEI). A compositionally biased stretch (basic and acidic residues) spans 1316 to 1347 (RQLDAKKAAAEKKKLQKEKLVSPDKTKQEPAD). A compositionally biased stretch (polar residues) spans 1350–1363 (MCQQNPGVPQQQTK). Over residues 1490-1499 (SYRRSSEVPH) the composition is skewed to basic and acidic residues. Composition is skewed to polar residues over residues 1502–1513 (SLQNPNSQKSFN), 1556–1572 (SVHS…QTSD), and 1730–1742 (VGNS…SQNH). H1804 contacts Fe cation. 1819–1821 (RIS) is a binding site for 2-oxoglutarate. Residues 1837–1870 (LALWEAKMKLLAERARVKEEEAARLGIKQEVKSL) adopt a coiled-coil conformation.

This sequence belongs to the TET family. Requires Fe(2+) as cofactor. Zn(2+) is required as a cofactor. As to expression, detected in embryo (at protein level). Detected in embryonic head, in developing brain, neural tube and eye.

It localises to the nucleus. The protein localises to the chromosome. It catalyses the reaction a 5-methyl-2'-deoxycytidine in DNA + 2-oxoglutarate + O2 = a 5-hydroxymethyl-2'-deoxycytidine in DNA + succinate + CO2. The catalysed reaction is a 5-hydroxymethyl-2'-deoxycytidine in DNA + 2-oxoglutarate + O2 = a 5-formyl-2'-deoxycytidine in DNA + succinate + CO2 + H2O. It carries out the reaction a 5-formyl-2'-deoxycytidine in DNA + 2-oxoglutarate + O2 = a 5-carboxyl-2'-deoxycytidine in DNA + succinate + CO2 + H(+). Its function is as follows. Dioxygenase that catalyzes the conversion of the modified genomic base 5-methylcytosine (5mC) into 5-hydroxymethylcytosine (5hmC) and plays a key role in epigenetic chromatin reprogramming during embryonic development. Conversion of 5mC into 5hmC probably constitutes the first step in cytosine demethylation. Selectively binds to the promoter region of target genes and contributes to regulate the expression of numerous developmental genes, including pax6, rax, sox9 and six3. May also contribute to the regulation of target genes in ways that do not require its enzyme activity. In Xenopus laevis (African clawed frog), this protein is Methylcytosine dioxygenase tet3-A.